The chain runs to 306 residues: Acetaldehyde dehydrogenase 2/3 (306 aa).

The active-site Acyl-thioester intermediate is C130. NAD(+) contacts are provided by residues S161–N169 and N272.

This sequence belongs to the acetaldehyde dehydrogenase family.

It catalyses the reaction acetaldehyde + NAD(+) + CoA = acetyl-CoA + NADH + H(+). This Azoarcus sp. (strain BH72) protein is Acetaldehyde dehydrogenase 2/3 (mhpF).